A 761-amino-acid polypeptide reads, in one-letter code: Proton-coupled zinc antiporter SLC30A5 (761 aa).

Methionine 1 carries the post-translational modification N-acetylmethionine. At methionine 1–arginine 29 the chain is on the cytoplasmic side. Residues tyrosine 30–phenylalanine 46 form a helical membrane-spanning segment. Residues glutamate 47–alanine 54 are Lumenal-facing. A helical transmembrane segment spans residues valine 55–phenylalanine 75. At glutamine 76–histidine 96 the chain is on the cytoplasmic side. The helical transmembrane segment at alanine 97 to leucine 117 threads the bilayer. A topological domain (lumenal) is located at residue arginine 118. A helical transmembrane segment spans residues threonine 119 to threonine 139. Over serine 140–glycine 150 the chain is Cytoplasmic. The helical transmembrane segment at alanine 151–alanine 171 threads the bilayer. Topologically, residues lysine 172–threonine 191 are lumenal. The helical transmembrane segment at alanine 192–leucine 212 threads the bilayer. Topologically, residues cysteine 213 to glutamine 236 are cytoplasmic. Residues alanine 237–threonine 257 form a helical membrane-spanning segment. At threonine 258–serine 264 the chain is on the lumenal side. Residues tryptophan 265–tyrosine 285 traverse the membrane as a helical segment. The Cytoplasmic segment spans residues methionine 286–arginine 301. The helical transmembrane segment at tyrosine 302–isoleucine 322 threads the bilayer. The Lumenal segment spans residues threonine 323–histidine 340. A helical membrane pass occupies residues valine 341–serine 361. Over serine 362–glutamine 416 the chain is Cytoplasmic. Residues isoleucine 417–leucine 437 form a helical membrane-spanning segment. Residues phenylalanine 418–leucine 636 form a mediates homodimerization with SLC30A6 region. At threonine 438 to aspartate 446 the chain is on the lumenal side. Residues glycine 447–serine 467 form a helical membrane-spanning segment. Zn(2+) contacts are provided by histidine 449 and aspartate 453. Residues arginine 468–arginine 481 lie on the Cytoplasmic side of the membrane. The chain crosses the membrane as a helical span at residues isoleucine 482–phenylalanine 502. Topologically, residues methionine 503–asparagine 518 are lumenal. A helical transmembrane segment spans residues methionine 519–serine 539. The interval histidine 540–histidine 574 is his-rich loop; required for zinc transport. Over histidine 540–valine 588 the chain is Cytoplasmic. A disordered region spans residues serine 549 to phenylalanine 576. A helical membrane pass occupies residues phenylalanine 589 to isoleucine 609. 2 residues coordinate Zn(2+): histidine 591 and aspartate 595. Topologically, residues glutamate 610–glycine 613 are lumenal. A helical membrane pass occupies residues tryptophan 614–isoleucine 634. At proline 635–methionine 761 the chain is on the cytoplasmic side.

The protein belongs to the cation diffusion facilitator (CDF) transporter (TC 2.A.4) family. SLC30A subfamily. In terms of assembly, heterodimer with SLC30A6/ZNT6; form a functional zinc ion transmembrane transporter. In terms of processing, could homodimerize through the formation of dityrosine bonds upon oxidative stress. Ubiquitously expressed.

The protein resides in the golgi apparatus. Its subcellular location is the golgi stack membrane. It localises to the cytoplasmic vesicle. It is found in the COPII-coated vesicle membrane. The protein localises to the secretory vesicle membrane. The protein resides in the trans-Golgi network membrane. It carries out the reaction Zn(2+)(in) + 2 H(+)(out) = Zn(2+)(out) + 2 H(+)(in). Its function is as follows. Together with SLC30A6 forms a functional proton-coupled zinc ion antiporter mediating zinc entry into the lumen of organelles along the secretory pathway. By contributing to zinc ion homeostasis within the early secretory pathway, regulates the activation and folding of enzymes like alkaline phosphatases and enzymes involved in phosphatidylinositol glycan anchor biosynthesis. Through the transport of zinc into secretory granules of pancreatic beta-cells, plays an important role in the storage and secretion of insulin. The protein is Proton-coupled zinc antiporter SLC30A5 of Mus musculus (Mouse).